The following is a 650-amino-acid chain: Chaperone protein DnaK (650 aa).

At Thr-200 the chain carries Phosphothreonine; by autocatalysis. Residues 612–632 (GEGATAGAAAGAGAAGGQQAQ) show a composition bias toward low complexity. The disordered stretch occupies residues 612 to 650 (GEGATAGAAAGAGAAGGQQAQPQDDNVVDAEFKEVNDKK). Positions 641–650 (AEFKEVNDKK) are enriched in basic and acidic residues.

The protein belongs to the heat shock protein 70 family.

Its function is as follows. Acts as a chaperone. This is Chaperone protein DnaK from Cupriavidus necator (strain ATCC 17699 / DSM 428 / KCTC 22496 / NCIMB 10442 / H16 / Stanier 337) (Ralstonia eutropha).